Reading from the N-terminus, the 336-residue chain is Phosphoribosylformylglycinamidine cyclo-ligase (336 aa).

The protein belongs to the AIR synthase family.

It is found in the cytoplasm. It catalyses the reaction 2-formamido-N(1)-(5-O-phospho-beta-D-ribosyl)acetamidine + ATP = 5-amino-1-(5-phospho-beta-D-ribosyl)imidazole + ADP + phosphate + H(+). Its pathway is purine metabolism; IMP biosynthesis via de novo pathway; 5-amino-1-(5-phospho-D-ribosyl)imidazole from N(2)-formyl-N(1)-(5-phospho-D-ribosyl)glycinamide: step 2/2. In Caldanaerobacter subterraneus subsp. tengcongensis (strain DSM 15242 / JCM 11007 / NBRC 100824 / MB4) (Thermoanaerobacter tengcongensis), this protein is Phosphoribosylformylglycinamidine cyclo-ligase.